Here is a 284-residue protein sequence, read N- to C-terminus: Formamidopyrimidine-DNA glycosylase (284 aa).

The active-site Schiff-base intermediate with DNA is Pro-2. Residue Glu-3 is the Proton donor of the active site. Lys-60 serves as the catalytic Proton donor; for beta-elimination activity. DNA is bound by residues His-99, Arg-118, and Arg-163. The FPG-type zinc finger occupies 248 to 282 (WVYGRQGQPCRTCGQTIERIKLVGRSTHFCPQCQP). Residue Arg-272 is the Proton donor; for delta-elimination activity of the active site.

It belongs to the FPG family. In terms of assembly, monomer. The cofactor is Zn(2+).

The catalysed reaction is Hydrolysis of DNA containing ring-opened 7-methylguanine residues, releasing 2,6-diamino-4-hydroxy-5-(N-methyl)formamidopyrimidine.. It catalyses the reaction 2'-deoxyribonucleotide-(2'-deoxyribose 5'-phosphate)-2'-deoxyribonucleotide-DNA = a 3'-end 2'-deoxyribonucleotide-(2,3-dehydro-2,3-deoxyribose 5'-phosphate)-DNA + a 5'-end 5'-phospho-2'-deoxyribonucleoside-DNA + H(+). Involved in base excision repair of DNA damaged by oxidation or by mutagenic agents. Acts as a DNA glycosylase that recognizes and removes damaged bases. Has a preference for oxidized purines, such as 7,8-dihydro-8-oxoguanine (8-oxoG). Has AP (apurinic/apyrimidinic) lyase activity and introduces nicks in the DNA strand. Cleaves the DNA backbone by beta-delta elimination to generate a single-strand break at the site of the removed base with both 3'- and 5'-phosphates. The polypeptide is Formamidopyrimidine-DNA glycosylase (Acaryochloris marina (strain MBIC 11017)).